A 170-amino-acid polypeptide reads, in one-letter code: Urease accessory protein UreE (170 aa).

It belongs to the UreE family.

The protein resides in the cytoplasm. Functionally, involved in urease metallocenter assembly. Binds nickel. Probably functions as a nickel donor during metallocenter assembly. This is Urease accessory protein UreE from Helicobacter pylori (strain P12).